The following is a 356-amino-acid chain: Rhomboid-related protein 1 (356 aa).

The next 7 helical transmembrane spans lie at 107-129 (WCPP…FFYW), 172-194 (YMFL…LVGI), 201-223 (KIWR…QYAI), 227-249 (SLLV…NVIL), 256-275 (LRWI…FGGA), 290-312 (HLAH…YNVV), and 319-341 (IIRY…FVIV). Catalysis depends on S233, which acts as the Nucleophile. The active site involves H293.

It belongs to the peptidase S54 family.

The protein localises to the membrane. It carries out the reaction Cleaves type-1 transmembrane domains using a catalytic dyad composed of serine and histidine that are contributed by different transmembrane domains.. Functionally, serine protease which activates lin-3 isoform a in the proximal vulva precursor cells (VPC) during vulva development to transmit the inductive anchor cell signal to the distal VPCs. The protein is Rhomboid-related protein 1 of Caenorhabditis elegans.